The following is a 335-amino-acid chain: Cut9-interacting protein scn1 (335 aa).

This sequence belongs to the metallo-dependent hydrolases superfamily.

In terms of biological role, interacts with cut9. The polypeptide is Cut9-interacting protein scn1 (scn1) (Schizosaccharomyces pombe (strain 972 / ATCC 24843) (Fission yeast)).